The primary structure comprises 204 residues: GTP cyclohydrolase-2 (204 aa).

A GTP-binding site is contributed by 49–53; the sequence is RIHSE. 3 residues coordinate Zn(2+): Cys-54, Cys-65, and Cys-67. GTP-binding positions include Gln-70, 92 to 94, and Thr-114; that span reads EGR. Asp-126 serves as the catalytic Proton acceptor. Arg-128 functions as the Nucleophile in the catalytic mechanism. Residues Thr-149 and Lys-154 each contribute to the GTP site.

Belongs to the GTP cyclohydrolase II family. Zn(2+) is required as a cofactor.

It carries out the reaction GTP + 4 H2O = 2,5-diamino-6-hydroxy-4-(5-phosphoribosylamino)-pyrimidine + formate + 2 phosphate + 3 H(+). It functions in the pathway cofactor biosynthesis; riboflavin biosynthesis; 5-amino-6-(D-ribitylamino)uracil from GTP: step 1/4. Functionally, catalyzes the conversion of GTP to 2,5-diamino-6-ribosylamino-4(3H)-pyrimidinone 5'-phosphate (DARP), formate and pyrophosphate. This Shewanella baltica (strain OS223) protein is GTP cyclohydrolase-2.